We begin with the raw amino-acid sequence, 781 residues long: MLPFRTYGETIDEYEVQHLLGKGGFACVYKAKCLRSHQNVAIKMIDKKLIQGSGLSNRVRQEVEIHSRLKHPSVLQLYTFFQDANYVYLILELADNGELHRYMNQQMKRPFTEQEAASILRQVVDGLLYLHSHNIMHRDISMSNLLLSKDMHVKIADFGLATQLKRPDERHMTMCGTPNYISPEVVSHQSHGLPADLWSVGCMLYTLLVGRPPFDTDAVQSTLNKVVQSDYTIPGHLSYEARDLIDKLLRKNPHERISLEQVLRHPFMVKAGGSTISYTTNGASDGYGQSIVSGDSGIVTFASNDSKNSHRLRSVEQQATPQMMPQIQEEYGYYQDHRQKYAPHAAYRQSSAETLDSTEMDWQRMGQNAQKANFLAHSTPAAPVPAPVIRKAGKHNTEHISVPPLNTLRLQPTRYKTKNAIMSIVANGEVVIEFIKSKSKMNEDRIIDICRISGDGRRIIIHQPDPGRGLPIQEQTSETHSSGTDNVYNYDNLPSKHWKKYVYAARFVGLVKSKTPKVTYFSALAKCHLMENMTDFEMNYYSGAKLTKSPSEGIKVFDIHGVQLLDQSSSEAKRLIEHSNECFAHCLSICNALELAQTGSNTCFPVTIGRRPVVEVLPSHRPEGLRDTTNFAYSTPKSQQGSINFSISTISSMRSGSDNIGSQLLAAQQNVPIKRLNVPGVGTATELSHGIVQVQFVDGSVISVIPEAQGGGITYTQSNGVSTHFPDHDDLPLSVRDRLSHLPQVQMKLRCAPLISSKKFDCNAMNAKSTASAPWYNRMLI.

Residues 14–268 form the Protein kinase domain; that stretch reads YEVQHLLGKG…LEQVLRHPFM (255 aa). ATP is bound by residues 20–28 and Lys43; that span reads LGKGGFACV. Asp139 serves as the catalytic Proton acceptor. Residues 397-514 enclose the Cryptic POLO box 1 (CPB1) domain; sequence TEHISVPPLN…ARFVGLVKSK (118 aa). Positions 463–486 are disordered; the sequence is QPDPGRGLPIQEQTSETHSSGTDN. Residues 473-486 show a composition bias toward polar residues; the sequence is QEQTSETHSSGTDN. The region spanning 515–618 is the Cryptic POLO box 2 (CPB2) domain; sequence TPKVTYFSAL…GRRPVVEVLP (104 aa). The region spanning 672-751 is the POLO box domain; sequence PIKRLNVPGV…LPQVQMKLRC (80 aa).

It belongs to the protein kinase superfamily. Ser/Thr protein kinase family. CDC5/Polo subfamily. In terms of assembly, homodimer. Ubiquitinated by the SCF(Slimb) ubiquitin ligase complex; leading to its degradation by the proteasome during interphase and regulating centriole number and ensuring the block to centriole reduplication.

It localises to the cytoplasm. Its subcellular location is the cytoskeleton. The protein resides in the microtubule organizing center. It is found in the centrosome. The protein localises to the centriole. The catalysed reaction is L-seryl-[protein] + ATP = O-phospho-L-seryl-[protein] + ADP + H(+). It carries out the reaction L-threonyl-[protein] + ATP = O-phospho-L-threonyl-[protein] + ADP + H(+). In terms of biological role, serine/threonine-protein kinase that plays a central role in centriole duplication. Able to trigger procentriole formation on the surface of the mother centriole cylinder, using mother centriole as a platform, leading to the recruitment of centriole biogenesis proteins such as sas-6. When overexpressed, it is able to induce centrosome amplification through the simultaneous generation of multiple procentrioles adjoining each parental centriole during S phase. Centrosome amplification following overexpression can initiate tumorigenesis, highlighting the importance of centrosome regulation in cancers. The sequence is that of Serine/threonine-protein kinase PLK4 (SAK) from Drosophila virilis (Fruit fly).